Consider the following 431-residue polypeptide: Enolase (431 aa).

Gln-167 contacts (2R)-2-phosphoglycerate. Glu-209 functions as the Proton donor in the catalytic mechanism. Mg(2+)-binding residues include Asp-246, Glu-289, and Asp-316. Residues Lys-341, Arg-370, Ser-371, and Lys-392 each contribute to the (2R)-2-phosphoglycerate site. Lys-341 serves as the catalytic Proton acceptor.

Belongs to the enolase family. As to quaternary structure, component of the RNA degradosome, a multiprotein complex involved in RNA processing and mRNA degradation. Mg(2+) is required as a cofactor.

The protein resides in the cytoplasm. Its subcellular location is the secreted. The protein localises to the cell surface. The enzyme catalyses (2R)-2-phosphoglycerate = phosphoenolpyruvate + H2O. Its pathway is carbohydrate degradation; glycolysis; pyruvate from D-glyceraldehyde 3-phosphate: step 4/5. Catalyzes the reversible conversion of 2-phosphoglycerate (2-PG) into phosphoenolpyruvate (PEP). It is essential for the degradation of carbohydrates via glycolysis. In Shewanella loihica (strain ATCC BAA-1088 / PV-4), this protein is Enolase.